The primary structure comprises 463 residues: Fumarate hydratase class II (463 aa).

Residues 95–97 (SGT), 126–129 (HPND), 136–138 (SSN), and Thr-184 contribute to the substrate site. The active-site Proton donor/acceptor is His-185. The active site involves Ser-315. Residues Ser-316 and 321 to 323 (KIN) contribute to the substrate site.

This sequence belongs to the class-II fumarase/aspartase family. Fumarase subfamily. As to quaternary structure, homotetramer.

It localises to the cytoplasm. The enzyme catalyses (S)-malate = fumarate + H2O. It participates in carbohydrate metabolism; tricarboxylic acid cycle; (S)-malate from fumarate: step 1/1. Involved in the TCA cycle. Catalyzes the stereospecific interconversion of fumarate to L-malate. This chain is Fumarate hydratase class II, found in Chlamydia trachomatis serovar D (strain ATCC VR-885 / DSM 19411 / UW-3/Cx).